Consider the following 212-residue polypeptide: uncharacterized protein (212 aa).

In terms of domain architecture, SIS spans 46–198 (LERVYREKRK…IYSLMTRLGI (153 aa)).

Belongs to the SIS family. PHI subfamily.

This is an uncharacterized protein from Aeropyrum pernix (strain ATCC 700893 / DSM 11879 / JCM 9820 / NBRC 100138 / K1).